Here is a 524-residue protein sequence, read N- to C-terminus: Leucine-rich repeat-containing protein 1 (524 aa).

LRR repeat units lie at residues 11-34 (NRHVEAIDKRHCSLVYVPEEIYRY), 35-58 (ARSLEELLLDANQLRELPEQFFQL), 60-81 (KLRKLGLSDNEIQRLPPEIANF), 83-105 (QLVELDVSRNDIPEIPESIAFCK), 107-126 (LQVADFSGNPLTRLPESFPE), 127-149 (LQNLTCLSVNDISLQSLPENIGN), 150-172 (LYNLASLELRENLLTYLPDSLTQ), 173-196 (LRRLEELDLGNNEIYNLPESIGAL), 198-218 (HLKDLWLDGNQLSELPQEIGN), 219-242 (LKNLLCLDVSENRLERLPEEISGL), 244-264 (SLTYLVISQNLLETIPEGIGK), 265-288 (LKKLSILKLDQNRLTQLPEAIGDC), 290-310 (NLTELVLTENRLLTLPKSIGK), 311-334 (LKKLSNLNADRNKLVSLPKEIGGC), 336-356 (SLTMFCIRDNRLTRLPAEVSQ), 357-380 (AVELHVLDVAGNRLHHLPLSLTTL), and 382-405 (LKALWLSDNQSQPLLTFQTDIDRA). Positions 456–512 (SAIRFLEDEKDEDENETRTLQRRATPHPGELKNMKKTVENLRNDMNAAKGLDSNKNE) form a coiled coil. Positions 464 to 485 (EKDEDENETRTLQRRATPHPGE) are disordered. T480 is subject to Phosphothreonine.

In terms of assembly, interacts with DLG1. May form a complex with DLG1 and ERBIN, where interaction between LRRC1 and ERBIN is indirect.

It is found in the cytoplasm. It localises to the membrane. This Mus musculus (Mouse) protein is Leucine-rich repeat-containing protein 1 (Lrrc1).